An 80-amino-acid chain; its full sequence is Exodeoxyribonuclease 7 small subunit (80 aa).

It belongs to the XseB family. Heterooligomer composed of large and small subunits.

It localises to the cytoplasm. It carries out the reaction Exonucleolytic cleavage in either 5'- to 3'- or 3'- to 5'-direction to yield nucleoside 5'-phosphates.. Bidirectionally degrades single-stranded DNA into large acid-insoluble oligonucleotides, which are then degraded further into small acid-soluble oligonucleotides. This Escherichia coli O6:K15:H31 (strain 536 / UPEC) protein is Exodeoxyribonuclease 7 small subunit.